The primary structure comprises 931 residues: Kinesin heavy chain (931 aa).

Residues 6–329 (SIKVVARFRP…LRFGMRAKSI (324 aa)) enclose the Kinesin motor domain. Residues 87–94 (GQTGAGKS) and 237–244 (GSEKVGKT) each bind ATP. Positions 342 to 864 (AELKSLLKKA…VKERLELAKA (523 aa)) form a coiled coil. Disordered regions lie at residues 388 to 465 (TTDA…EKQL) and 886 to 931 (AKPL…FTKS). The span at 402–419 (STRPSTPSLISDSRSETP) shows a compositional bias: polar residues. Basic and acidic residues predominate over residues 432–456 (LDKDEREEFLRRENELQDQISEKES). A compositionally biased stretch (polar residues) spans 902–931 (PTIQNLQGQNEGNTSSGSSSKRASWFFTKS).

Belongs to the TRAFAC class myosin-kinesin ATPase superfamily. Kinesin family. Kinesin subfamily.

It is found in the cytoplasm. The protein resides in the cytoskeleton. Functionally, kinesin is a microtubule-associated force-producing protein that may play a role in organelle transport. Its motor activity is directed toward the microtubule's plus end. This Gibberella moniliformis (Maize ear and stalk rot fungus) protein is Kinesin heavy chain (KLP1).